An 80-amino-acid chain; its full sequence is Acyl carrier protein (80 aa).

The region spanning 4–79 is the Carrier domain; that stretch reads EAILEKVRSI…DAVKYIEDKQ (76 aa). At Ser39 the chain carries O-(pantetheine 4'-phosphoryl)serine.

Belongs to the acyl carrier protein (ACP) family. Post-translationally, 4'-phosphopantetheine is transferred from CoA to a specific serine of apo-ACP by AcpS. This modification is essential for activity because fatty acids are bound in thioester linkage to the sulfhydryl of the prosthetic group.

It is found in the cytoplasm. The protein operates within lipid metabolism; fatty acid biosynthesis. In terms of biological role, carrier of the growing fatty acid chain in fatty acid biosynthesis. The chain is Acyl carrier protein from Parasynechococcus marenigrum (strain WH8102).